Here is a 337-residue protein sequence, read N- to C-terminus: Ribosomal RNA small subunit methyltransferase C (337 aa).

This sequence belongs to the methyltransferase superfamily. RsmC family. As to quaternary structure, monomer.

It localises to the cytoplasm. It catalyses the reaction guanosine(1207) in 16S rRNA + S-adenosyl-L-methionine = N(2)-methylguanosine(1207) in 16S rRNA + S-adenosyl-L-homocysteine + H(+). Functionally, specifically methylates the guanine in position 1207 of 16S rRNA in the 30S particle. This is Ribosomal RNA small subunit methyltransferase C from Proteus mirabilis (strain HI4320).